A 142-amino-acid chain; its full sequence is Large-conductance mechanosensitive channel (142 aa).

2 helical membrane-spanning segments follow: residues 14–34 (VVDL…VSSL) and 86–106 (FGQF…VFLV).

Belongs to the MscL family. As to quaternary structure, homopentamer.

The protein localises to the cell inner membrane. Its function is as follows. Channel that opens in response to stretch forces in the membrane lipid bilayer. May participate in the regulation of osmotic pressure changes within the cell. The polypeptide is Large-conductance mechanosensitive channel (Rhizorhabdus wittichii (strain DSM 6014 / CCUG 31198 / JCM 15750 / NBRC 105917 / EY 4224 / RW1) (Sphingomonas wittichii)).